A 2244-amino-acid polypeptide reads, in one-letter code: Multifunctional protein ura1 (2244 aa).

A GATase (Glutamine amidotransferase) region spans residues 1–437 (MSGLLPSLSS…GPRDTEFLFD (437 aa)). A disordered region spans residues 16 to 44 (QSEALGMPRTHGPKPSENDPKEPTCSPSP). L-glutamine contacts are provided by Ser101, Gly309, and Gly311. The Glutamine amidotransferase type-1 domain maps to 264–449 (RILVIDVGMK…IDVVKRSADA (186 aa)). Cys338 (nucleophile; for GATase activity) is an active-site residue. L-glutamine-binding residues include Gln342, Asn380, Gly382, and Tyr383. Catalysis depends on for GATase activity residues His422 and Glu424. The linker stretch occupies residues 438-477 (VFIDVVKRSADAKSLQPFKLPGGTIEENRSRHPLVDAKRV). Residues 478 to 1014 (LILGSGGLSI…VEHDIHFNDK (537 aa)) are CPSase A. The tract at residues 478–1514 (LILGSGGLSI…TNVKCAKLMI (1037 aa)) is CPSase (Carbamoyl phosphate synthase). Positions 594, 634, 640, 641, 671, 673, 678, 704, 705, 706, 747, and 761 each coordinate ATP. The ATP-grasp 1 domain maps to 598–790 (ARAMDEINEK…LAFTAAKLGL (193 aa)). Gln747, Glu761, and Asn763 together coordinate Mg(2+). 3 residues coordinate Mn(2+): Gln747, Glu761, and Asn763. The CPSase B stretch occupies residues 1015-1514 (GVMVLGSGVY…TNVKCAKLMI (500 aa)). Position 1119 is a phosphoserine (Ser1119). Positions 1133 to 1324 (SRMLDDIGVD…MISMATDVIM (192 aa)) constitute an ATP-grasp 2 domain. The ATP site is built by Arg1169, Lys1208, Ile1210, Glu1215, Gly1240, Val1241, His1242, Ser1243, Gln1283, and Glu1295. Mg(2+)-binding residues include Gln1283, Glu1295, and Asn1297. Gln1283, Glu1295, and Asn1297 together coordinate Mn(2+). The region spanning 1390–1552 (FRLPKKNILI…INISAFLPEF (163 aa)) is the MGS-like domain. The interval 1515-1524 (EAICRNLDFS) is linker. The interval 1525–1853 (LSTVDFQSSF…FDGHDVFFDG (329 aa)) is defective DHOase domain. Residues 1854-1935 (ELNFEHTYGR…VQLINSSPFY (82 aa)) form a linker region. Phosphoserine is present on residues Ser1881 and Ser1885. Positions 1936 to 2244 (RKHIISVHQV…CVMGATEVAN (309 aa)) are ATCase (Aspartate transcarbamylase). Residues Arg1988 and Thr1989 each coordinate carbamoyl phosphate. Lys2016 provides a ligand contact to L-aspartate. Carbamoyl phosphate-binding residues include Arg2037, His2065, and Gln2068. Residues Arg2098 and Arg2160 each contribute to the L-aspartate site. Leu2199 and Pro2200 together coordinate carbamoyl phosphate.

In the N-terminal section; belongs to the CarA family. It in the 2nd section; belongs to the CarB family. The protein in the 3rd section; belongs to the metallo-dependent hydrolases superfamily. DHOase family. CAD subfamily. This sequence in the C-terminal section; belongs to the aspartate/ornithine carbamoyltransferase superfamily. ATCase family. The cofactor is Mg(2+). Mn(2+) is required as a cofactor.

The catalysed reaction is hydrogencarbonate + L-glutamine + 2 ATP + H2O = carbamoyl phosphate + L-glutamate + 2 ADP + phosphate + 2 H(+). It catalyses the reaction L-glutamine + H2O = L-glutamate + NH4(+). It carries out the reaction hydrogencarbonate + NH4(+) + 2 ATP = carbamoyl phosphate + 2 ADP + phosphate + 2 H(+). The enzyme catalyses carbamoyl phosphate + L-aspartate = N-carbamoyl-L-aspartate + phosphate + H(+). It functions in the pathway pyrimidine metabolism; UMP biosynthesis via de novo pathway; (S)-dihydroorotate from bicarbonate: step 1/3. Its pathway is pyrimidine metabolism; UMP biosynthesis via de novo pathway; (S)-dihydroorotate from bicarbonate: step 2/3. Its activity is regulated as follows. Both CPSase and ATCase activities are feedback inhibited by the end product UTP. Its function is as follows. Multifunctional protein that encodes the first 2 enzymatic activities of the de novo pyrimidine pathway: carbamoylphosphate synthetase (CPSase; EC 6.3.5.5) and aspartate transcarbamylase (ATCase; EC 2.1.3.2). The CPSase-function is accomplished in 2 steps, by a glutamine-dependent amidotransferase activity (GATase) that binds and cleaves glutamine to produce ammonia, followed by an ammonium-dependent carbamoyl phosphate synthetase, which reacts with the ammonia, hydrogencarbonate and ATP to form carbamoyl phosphate. The endogenously produced carbamoyl phosphate is sequestered and channeled to the ATCase active site. ATCase then catalyzes the formation of carbamoyl-L-aspartate from L-aspartate and carbamoyl phosphate. In Schizosaccharomyces pombe (strain 972 / ATCC 24843) (Fission yeast), this protein is Multifunctional protein ura1 (ura1).